The sequence spans 983 residues: MDTHQSFNENQHPNFNSGNHGGINMNRFQRFSKPTISPIQQQQQPQPQQPSSIIQRQSIIMTQPQPQPQPQMIPIFREPNEWYKLIDMEMNKFNNESRPSPEYIKYLTQLFQQALDSLEHKNTPEFYLFLLNRATFQSKIGENEDAKGTLKYMKVLKMESFEVFVLLSEIESKSFRFSKARSIINRGIQKIPSRSKEFEGFLMVIDIQEDEFSRNGCIISNNNNISFNNGDVNNNSIIMNENDQPMVINLNPQQQQQQQQQPYEISSSSSLMSTPASSRHLSNRSSIVPTPNSSTKLSESIKTIGLRSVQPRRVIHKQTTTNFNTTTTTIPENSYDDDADQPMDHDGNNNNNFRIHSNNNNNSSANSSYNKSENDEDDQDEEDEEEEDEDEDDDEEDEEEYEDNNNNNNNNNNNNNNNNNNNNNNNNNNYFKYNRQQYILNNDSDTSTNPNSPASSNSSVNDIINSISITDDSKLDYENNVKLQQQQQQQQQQQQQQQQQQQQQQQQQYIQQQQQQQPKIHPQRFSLQNNTPTTTTTTTAATNVQNPSSSSSYISPPLSSQSSELQHQRRHSIQAQRANKPPVIPPPSKLHQNNLQQQQQQQQQQQQQQQQQQQQQLLLQQQALLQQQQQQQILLQQQQQQQQQQQQQQQQQKQQEQQLKKTNMQPPPPKQPQPQTQTQQQQKNINNSEIVDKEKSFEVAKSWSEVAMVNGKPYLRIEFIGKGGSGKVYKVLSGDLKIYALKYVCLSDPNEIEAQLNEIEMLKRLRKQVNIIQLIDYEVNMAKNYILLVLEFGEIDLSKLLQRLQTPNGTNVNFIRIYWQQMLQAVHTIHEEKIIHGDLKPANFVSVQGSLKLIDFGIAKAIQSDDTTNIVRESQIGTINYISPEALIDTSQGGPKQCMKLGRASDIWSLGCILYEMAFGYPPFKSFSNIISKYQAIINPHHKIEFPVHPNENLLKVLKLCLIRNPHERPTIPTLLNHDFLKI.

Residues 1–18 (MDTHQSFNENQHPNFNSG) show a composition bias toward polar residues. Disordered stretches follow at residues 1-26 (MDTH…INMN), 252-430 (PQQQ…NNNY), 441-460 (NNDS…NSSV), 513-601 (QQQQ…QQQQ), and 654-691 (QQEQ…SEIV). Residues 253–278 (QQQQQQQQQPYEISSSSSLMSTPASS) show a composition bias toward low complexity. Positions 279–301 (RHLSNRSSIVPTPNSSTKLSESI) are enriched in polar residues. 2 stretches are compositionally biased toward low complexity: residues 319 to 329 (TTTNFNTTTTT) and 348 to 371 (NNNN…SYNK). Acidic residues predominate over residues 374–403 (NDEDDQDEEDEEEEDEDEDDDEEDEEEYED). Residues 380-430 (DEEDEEEEDEDEDDDEEDEEEYEDNNNNNNNNNNNNNNNNNNNNNNNNNNY) adopt a coiled-coil conformation. Over residues 404–429 (NNNNNNNNNNNNNNNNNNNNNNNNNN) the composition is skewed to low complexity. Residues 474–517 (KLDYENNVKLQQQQQQQQQQQQQQQQQQQQQQQQQYIQQQQQQQ) are a coiled coil. The span at 529-563 (NNTPTTTTTTTAATNVQNPSSSSSYISPPLSSQSS) shows a compositional bias: low complexity. The stretch at 588 to 665 (SKLHQNNLQQ…EQQLKKTNMQ (78 aa)) forms a coiled coil. A compositionally biased stretch (low complexity) spans 673–683 (QPQTQTQQQQK). Positions 714-981 (YLRIEFIGKG…IPTLLNHDFL (268 aa)) constitute a Protein kinase domain. Residues 720–728 (IGKGGSGKV) and Lys-742 contribute to the ATP site. Residue Asp-838 is the Proton acceptor of the active site.

This sequence belongs to the protein kinase superfamily. Ser/Thr protein kinase family.

The catalysed reaction is L-seryl-[protein] + ATP = O-phospho-L-seryl-[protein] + ADP + H(+). It catalyses the reaction L-threonyl-[protein] + ATP = O-phospho-L-threonyl-[protein] + ADP + H(+). This Dictyostelium discoideum (Social amoeba) protein is Probable serine/threonine-protein kinase mps1 (mps1).